Here is a 264-residue protein sequence, read N- to C-terminus: Heavy metal-associated isoprenylated plant protein 17 (264 aa).

HMA domains follow at residues Val-32–Glu-95 and Ile-133–Gln-204. Residues Ser-185 to Glu-218 adopt a coiled-coil conformation. Cys-261 bears the Cysteine methyl ester mark. Cys-261 is lipidated: S-farnesyl cysteine. Residues Ser-262–Ser-264 constitute a propeptide, removed in mature form.

It belongs to the HIPP family.

Probable heavy-metal-binding protein. The sequence is that of Heavy metal-associated isoprenylated plant protein 17 from Arabidopsis thaliana (Mouse-ear cress).